Reading from the N-terminus, the 104-residue chain is Large ribosomal subunit protein uL23 (104 aa).

The protein belongs to the universal ribosomal protein uL23 family. In terms of assembly, part of the 50S ribosomal subunit. Contacts protein L29, and trigger factor when it is bound to the ribosome.

In terms of biological role, one of the early assembly proteins it binds 23S rRNA. One of the proteins that surrounds the polypeptide exit tunnel on the outside of the ribosome. Forms the main docking site for trigger factor binding to the ribosome. The polypeptide is Large ribosomal subunit protein uL23 (Burkholderia multivorans (strain ATCC 17616 / 249)).